A 175-amino-acid polypeptide reads, in one-letter code: Protein FAM89A (175 aa).

Residues 141–175 are disordered; sequence FQEQGSLQDGQHHGSPRDQSPLTHLSSSDWILESI. Residues 157–169 are compositionally biased toward polar residues; that stretch reads RDQSPLTHLSSSD.

This sequence belongs to the FAM89 family.

The protein is Protein FAM89A (Fam89a) of Mus musculus (Mouse).